Reading from the N-terminus, the 329-residue chain is Replication factor C small subunit 1 (329 aa).

Position 44–51 (44–51) interacts with ATP; that stretch reads GPPGTGKT.

This sequence belongs to the activator 1 small subunits family. RfcS subfamily. Heteromultimer composed of small subunits (RfcS) and large subunits (RfcL).

Functionally, part of the RFC clamp loader complex which loads the PCNA sliding clamp onto DNA. The polypeptide is Replication factor C small subunit 1 (Pyrobaculum islandicum (strain DSM 4184 / JCM 9189 / GEO3)).